The chain runs to 164 residues: OV-17 antigen (164 aa).

The signal sequence occupies residues 1-16 (MKFVILLTIGLLVVAA). Residues 24–43 (QQQQQQQQQRDEREIPPFLE) are disordered.

It belongs to the SXP/RAL-2 family. In terms of tissue distribution, high levels in the hypodermal layer of the adult female.

The protein is OV-17 antigen (OV17) of Onchocerca volvulus.